A 752-amino-acid polypeptide reads, in one-letter code: Kaurene synthase like 2, chloroplastic (752 aa).

A chloroplast-targeting transit peptide spans 1–28; sequence MSLLLSNSALVGPKFRSSRISHASASLD. Mg(2+) is bound by residues D538, D542, N682, and E690. A DDXXD motif motif is present at residues 538–542; the sequence is DDLFD.

The protein belongs to the terpene synthase family. The cofactor is Mg(2+). As to expression, highly expressed in leaves.

It is found in the plastid. Its subcellular location is the chloroplast. The protein operates within secondary metabolite biosynthesis; terpenoid biosynthesis. In terms of biological role, involved in the biosynthesis of ent-kaurene diterpenoids natural products such as oridonin, miltiradiene, eriocalyxin B and nezukol, known to exhibit antitumor, anti-inflammatory and antibacterial activities. Catalyzes the conversion of ent-copalyl diphosphate (ent-CPP) to ent-isopimaradiene like compounds. This chain is Kaurene synthase like 2, chloroplastic, found in Isodon rubescens (Rabdosia rubescens).